A 641-amino-acid chain; its full sequence is DNA primase (641 aa).

The CHC2-type zinc-finger motif lies at 41–65 (CPFHDEKSPSFQVSPSKGFFHCFGC). The Toprim domain occupies 262–346 (SRAVVVEGYT…AAETYIAIAP (85 aa)). Mg(2+) contacts are provided by Glu268, Asp317, and Asp319. The interval 444 to 478 (RDRGGKGPAPDQRQRGGGPQQQAGPMTATPRGPAL) is disordered.

It belongs to the DnaG primase family. Monomer. Interacts with DnaB. Zn(2+) is required as a cofactor. It depends on Mg(2+) as a cofactor.

It catalyses the reaction ssDNA + n NTP = ssDNA/pppN(pN)n-1 hybrid + (n-1) diphosphate.. In terms of biological role, RNA polymerase that catalyzes the synthesis of short RNA molecules used as primers for DNA polymerase during DNA replication. The chain is DNA primase from Streptomyces coelicolor (strain ATCC BAA-471 / A3(2) / M145).